The sequence spans 114 residues: Large ribosomal subunit protein uL18 (114 aa).

The protein belongs to the universal ribosomal protein uL18 family. Part of the 50S ribosomal subunit; part of the 5S rRNA/L5/L18/L25 subcomplex. Contacts the 5S and 23S rRNAs.

Functionally, this is one of the proteins that bind and probably mediate the attachment of the 5S RNA into the large ribosomal subunit, where it forms part of the central protuberance. The sequence is that of Large ribosomal subunit protein uL18 from Parabacteroides distasonis (strain ATCC 8503 / DSM 20701 / CIP 104284 / JCM 5825 / NCTC 11152).